A 332-amino-acid polypeptide reads, in one-letter code: Cytoplasmic phosphatidylinositol transfer protein 1 (332 aa).

Phosphoserine is present on residues S119, S270, and S274. Over residues 267-285 (SVRSAPSSAPSTPLSTDAP) the composition is skewed to low complexity. The tract at residues 267-332 (SVRSAPSSAP…SDKPCRPKSE (66 aa)) is disordered. A Phosphothreonine modification is found at T278. Basic and acidic residues predominate over residues 322 to 332 (SSDKPCRPKSE).

The protein belongs to the PtdIns transfer protein family. PI transfer class IIB subfamily. In terms of tissue distribution, ubiquitously expressed.

The protein resides in the cytoplasm. It catalyses the reaction a 1,2-diacyl-sn-glycero-3-phospho-(1D-myo-inositol)(in) = a 1,2-diacyl-sn-glycero-3-phospho-(1D-myo-inositol)(out). It carries out the reaction a 1,2-diacyl-sn-glycero-3-phosphate(in) = a 1,2-diacyl-sn-glycero-3-phosphate(out). In terms of biological role, catalyzes the transfer of phosphatidylinositol (PI) and phosphatidic acid (PA) between membranes. Binds PA derived from the phospholipase D signaling pathway and among the cellular PA species, preferably binds to the C16:0/16:1 and C16:1/18:1 PA species. Functionally, catalyzes the transfer of phosphatidylinositol between membranes. This Homo sapiens (Human) protein is Cytoplasmic phosphatidylinositol transfer protein 1 (PITPNC1).